A 345-amino-acid chain; its full sequence is Thylakoid lumenal 29 kDa protein, chloroplastic (345 aa).

This sequence belongs to the peroxidase family.

The protein resides in the plastid. It localises to the chloroplast thylakoid lumen. The protein is Thylakoid lumenal 29 kDa protein, chloroplastic (CLEB3J9) of Solanum lycopersicum (Tomato).